The primary structure comprises 312 residues: Putative S-adenosyl-L-methionine-dependent methyltransferase Mjls_0078 (312 aa).

S-adenosyl-L-methionine contacts are provided by residues D134 and 163-164; that span reads DL.

The protein belongs to the UPF0677 family.

Its function is as follows. Exhibits S-adenosyl-L-methionine-dependent methyltransferase activity. This Mycobacterium sp. (strain JLS) protein is Putative S-adenosyl-L-methionine-dependent methyltransferase Mjls_0078.